The chain runs to 626 residues: 5'-AMP-activated protein kinase catalytic subunit alpha-2 (626 aa).

The segment covering 1–24 (MFSHQDRDRDRKEDGGGDGTEMKS) has biased composition (basic and acidic residues). A disordered region spans residues 1–77 (MFSHQDRDRD…GETSTKQQQE (77 aa)). The span at 38–49 (NLSRKLSAKSRK) shows a compositional bias: basic residues. Residues 58-77 (DNSSKMSSPGGETSTKQQQE) show a composition bias toward polar residues. Positions 87-339 (YILKETLGVG…IKDVIAHEWF (253 aa)) constitute a Protein kinase domain. Residues 93-101 (LGVGTFGKV) and Lys-116 contribute to the ATP site. The active-site Proton acceptor is Asp-210. Position 243 is a phosphothreonine; by par-4 (Thr-243). Residues 541-568 (SGSASASSSRHASMSMPQKPAGIRGTRT) are disordered. Residues 542-555 (GSASASSSRHASMS) are compositionally biased toward low complexity.

This sequence belongs to the protein kinase superfamily. CAMK Ser/Thr protein kinase family. SNF1 subfamily. As to quaternary structure, tetramer, composed of 2 regulatory (R) and 2 catalytic (C) subunits. In the presence of cAMP it dissociates into 2 active monomeric C subunits and an R dimer that binds four cAMP molecules. Phosphorylated on Thr-243 in response to oxidative stress and during dauer development. Phosphorylation at Thr-243 is increased in response to sodium azide or the AMP analog AICAR (5-amino-1-(5-phospho-beta-D-ribosyl)imidazole-4-carboxamide). As to expression, expressed in the pharynx, the ventral cord, neurons including the hermaphrodite-specific neuron, body wall muscles, the vulva, the excretory canal, and weakly in the intestine.

The enzyme catalyses L-seryl-[protein] + ATP = O-phospho-L-seryl-[protein] + ADP + H(+). It carries out the reaction L-threonyl-[protein] + ATP = O-phospho-L-threonyl-[protein] + ADP + H(+). Activated by phosphorylation. In terms of biological role, acts as a sensor that couples lifespan to information about energy levels and insulin-like signals. Role in motility and response to oxidative stress. Involved in the establishment of germline stem cell (GSC) quiescence during dauer development. Plays a role in axon regrowth after axotomy in PLM neurons. Plays a role in the maintenance of glycogen stores which are necessary for resistance to hyperosmotic stress. Plays a role in the regulation of flp-7 secretion from ASI neurons. Keeps the CREB-regulated transcription coactivator 1 homolog crtc-1 inactive which in turn inhibits flp-7 secretion. Following serotonin signaling, derepresses crtc-1 which stimulates flp-7 secretion and subsequent body fat loss. The sequence is that of 5'-AMP-activated protein kinase catalytic subunit alpha-2 from Caenorhabditis elegans.